A 437-amino-acid polypeptide reads, in one-letter code: ATP-dependent protease ATPase subunit HslU (437 aa).

ATP is bound by residues I18, 60-65 (GVGKTE), D250, E315, and R387.

This sequence belongs to the ClpX chaperone family. HslU subfamily. As to quaternary structure, a double ring-shaped homohexamer of HslV is capped on each side by a ring-shaped HslU homohexamer. The assembly of the HslU/HslV complex is dependent on binding of ATP.

It is found in the cytoplasm. Its function is as follows. ATPase subunit of a proteasome-like degradation complex; this subunit has chaperone activity. The binding of ATP and its subsequent hydrolysis by HslU are essential for unfolding of protein substrates subsequently hydrolyzed by HslV. HslU recognizes the N-terminal part of its protein substrates and unfolds these before they are guided to HslV for hydrolysis. This chain is ATP-dependent protease ATPase subunit HslU, found in Dinoroseobacter shibae (strain DSM 16493 / NCIMB 14021 / DFL 12).